The sequence spans 156 residues: Protein LlR18B (156 aa).

The trans-zeatin site is built by D8 and D28. Ca(2+)-binding residues include P32 and I38. Trans-zeatin is bound by residues K54, E133, and K136.

The protein belongs to the BetVI family. As to expression, ubiquitous, with higher levels in roots.

The protein resides in the cytoplasm. The protein localises to the cytosol. Functionally, class II ribonuclease (RNase), with low activity on single-strand RNA. Binds to cytokinins. Interacts with melatonin. This is Protein LlR18B (LLR18B) from Lupinus luteus (European yellow lupine).